We begin with the raw amino-acid sequence, 355 residues long: UDP-N-acetylglucosamine--N-acetylmuramyl-(pentapeptide) pyrophosphoryl-undecaprenol N-acetylglucosamine transferase (355 aa).

UDP-N-acetyl-alpha-D-glucosamine is bound by residues 15-17 (TGG), N127, R163, S191, I244, 263-268 (ALTVSE), and Q288.

Belongs to the glycosyltransferase 28 family. MurG subfamily.

The protein resides in the cell inner membrane. The enzyme catalyses di-trans,octa-cis-undecaprenyl diphospho-N-acetyl-alpha-D-muramoyl-L-alanyl-D-glutamyl-meso-2,6-diaminopimeloyl-D-alanyl-D-alanine + UDP-N-acetyl-alpha-D-glucosamine = di-trans,octa-cis-undecaprenyl diphospho-[N-acetyl-alpha-D-glucosaminyl-(1-&gt;4)]-N-acetyl-alpha-D-muramoyl-L-alanyl-D-glutamyl-meso-2,6-diaminopimeloyl-D-alanyl-D-alanine + UDP + H(+). Its pathway is cell wall biogenesis; peptidoglycan biosynthesis. In terms of biological role, cell wall formation. Catalyzes the transfer of a GlcNAc subunit on undecaprenyl-pyrophosphoryl-MurNAc-pentapeptide (lipid intermediate I) to form undecaprenyl-pyrophosphoryl-MurNAc-(pentapeptide)GlcNAc (lipid intermediate II). The protein is UDP-N-acetylglucosamine--N-acetylmuramyl-(pentapeptide) pyrophosphoryl-undecaprenol N-acetylglucosamine transferase of Escherichia coli O45:K1 (strain S88 / ExPEC).